The chain runs to 52 residues: Large ribosomal subunit protein bL33A (52 aa).

This sequence belongs to the bacterial ribosomal protein bL33 family.

This chain is Large ribosomal subunit protein bL33A, found in Staphylococcus aureus (strain USA300).